A 121-amino-acid chain; its full sequence is Large ribosomal subunit protein uL18 (121 aa).

This sequence belongs to the universal ribosomal protein uL18 family. Part of the 50S ribosomal subunit; part of the 5S rRNA/L5/L18/L25 subcomplex. Contacts the 5S and 23S rRNAs.

Functionally, this is one of the proteins that bind and probably mediate the attachment of the 5S RNA into the large ribosomal subunit, where it forms part of the central protuberance. This chain is Large ribosomal subunit protein uL18, found in Streptococcus suis (strain 98HAH33).